Here is a 237-residue protein sequence, read N- to C-terminus: 7-cyano-7-deazaguanine synthase (237 aa).

Position 14-24 (14-24 (FSGGQDSATCL)) interacts with ATP. Residues cysteine 202, cysteine 217, cysteine 220, and cysteine 223 each coordinate Zn(2+).

Belongs to the QueC family. Zn(2+) serves as cofactor.

It catalyses the reaction 7-carboxy-7-deazaguanine + NH4(+) + ATP = 7-cyano-7-deazaguanine + ADP + phosphate + H2O + H(+). The protein operates within purine metabolism; 7-cyano-7-deazaguanine biosynthesis. In terms of biological role, catalyzes the ATP-dependent conversion of 7-carboxy-7-deazaguanine (CDG) to 7-cyano-7-deazaguanine (preQ(0)). In Rhodopseudomonas palustris (strain ATCC BAA-98 / CGA009), this protein is 7-cyano-7-deazaguanine synthase.